Here is a 324-residue protein sequence, read N- to C-terminus: HPr kinase/phosphorylase (324 aa).

Residues His146 and Lys167 contribute to the active site. 161 to 168 (GDSGLGKS) contributes to the ATP binding site. Ser168 lines the Mg(2+) pocket. Asp185 (proton acceptor; for phosphorylation activity. Proton donor; for dephosphorylation activity) is an active-site residue. The segment at 209-218 (LEVRGLGLLD) is important for the catalytic mechanism of both phosphorylation and dephosphorylation. Glu210 serves as a coordination point for Mg(2+). Arg250 is an active-site residue. Positions 271 to 276 (QVAAGR) are important for the catalytic mechanism of dephosphorylation.

This sequence belongs to the HPrK/P family. Homohexamer. The cofactor is Mg(2+).

The catalysed reaction is [HPr protein]-L-serine + ATP = [HPr protein]-O-phospho-L-serine + ADP + H(+). It carries out the reaction [HPr protein]-O-phospho-L-serine + phosphate + H(+) = [HPr protein]-L-serine + diphosphate. Its function is as follows. Catalyzes the ATP- as well as the pyrophosphate-dependent phosphorylation of a specific serine residue in HPr, a phosphocarrier protein of the phosphoenolpyruvate-dependent sugar phosphotransferase system (PTS). HprK/P also catalyzes the pyrophosphate-producing, inorganic phosphate-dependent dephosphorylation (phosphorolysis) of seryl-phosphorylated HPr (P-Ser-HPr). The polypeptide is HPr kinase/phosphorylase (Ralstonia nicotianae (strain ATCC BAA-1114 / GMI1000) (Ralstonia solanacearum)).